The sequence spans 343 residues: uncharacterized protein (343 aa).

11 helical membrane passes run 13-33 (VILYLVGHHLYLIPTTISMCG), 44-64 (LWGYISIITATIFFGISATLD), 71-91 (MHPVTIGAYTYIIAGIFLFFI), 121-141 (ILLLTALLSTVIAPLLFLTGL), 148-168 (NASLILNVEVLFIILLGYLIF), 177-197 (FLGIVLIILGAVYLLTEGDFS), 203-223 (VAVTGNFLVMAAAFFWSLDTV), 244-264 (VGGFVLLIIMLILGINTELPL), 269-289 (YALGVSVFSIGCSFILIYIAI), 296-316 (MVGALFPLSSLFGAIFAFIIL), and 320-340 (FSIMQGISGIVMLTGVFILYW). EamA domains follow at residues 55 to 192 (IFFG…YLLT) and 216 to 340 (FFWS…ILYW).

The protein belongs to the EamA transporter family.

The protein resides in the cell membrane. This is an uncharacterized protein from Methanothermobacter thermautotrophicus (strain ATCC 29096 / DSM 1053 / JCM 10044 / NBRC 100330 / Delta H) (Methanobacterium thermoautotrophicum).